The chain runs to 365 residues: Flagellar P-ring protein (365 aa).

The first 19 residues, 1–19 (MFKALAGIVLALVATLAHA), serve as a signal peptide directing secretion.

The protein belongs to the FlgI family. As to quaternary structure, the basal body constitutes a major portion of the flagellar organelle and consists of four rings (L,P,S, and M) mounted on a central rod.

Its subcellular location is the periplasm. The protein resides in the bacterial flagellum basal body. Functionally, assembles around the rod to form the L-ring and probably protects the motor/basal body from shearing forces during rotation. This is Flagellar P-ring protein from Salmonella heidelberg (strain SL476).